We begin with the raw amino-acid sequence, 348 residues long: Ion-translocating oxidoreductase complex subunit D (348 aa).

Transmembrane regions (helical) follow at residues 20 to 39 (VMRL…CYLF), 67 to 87 (YVVS…LIAV), and 124 to 144 (AMVG…NWMA). The residue at position 187 (T187) is an FMN phosphoryl threonine. Transmembrane regions (helical) follow at residues 221 to 241 (WINL…LIPW), 244 to 264 (PVAM…LAPA), 266 to 286 (FAMP…FFII), and 300 to 320 (LVFG…GGYP).

The protein belongs to the NqrB/RnfD family. As to quaternary structure, the complex is composed of six subunits: RnfA, RnfB, RnfC, RnfD, RnfE and RnfG. It depends on FMN as a cofactor.

It localises to the cell inner membrane. In terms of biological role, part of a membrane-bound complex that couples electron transfer with translocation of ions across the membrane. The chain is Ion-translocating oxidoreductase complex subunit D from Tolumonas auensis (strain DSM 9187 / NBRC 110442 / TA 4).